Consider the following 84-residue polypeptide: U8-theraphotoxin-Hhn1c 1 (84 aa).

Positions 1–21 (MKVVLIVCLVWVMAMMELVSC) are cleaved as a signal peptide. Cystine bridges form between cysteine 23-cysteine 35, cysteine 29-cysteine 44, cysteine 34-cysteine 67, cysteine 54-cysteine 75, and cysteine 69-cysteine 81.

This sequence belongs to the AVIT (prokineticin) family. As to expression, expressed by the venom gland.

Its subcellular location is the secreted. This chain is U8-theraphotoxin-Hhn1c 1, found in Cyriopagopus hainanus (Chinese bird spider).